Here is a 761-residue protein sequence, read N- to C-terminus: Semaphorin-3D (761 aa).

Positions 1–24 (MRASQVPNACSLLSLAMLFFPVTG) are cleaved as a signal peptide. The 488-residue stretch at 32-519 (RLKLSYKDLL…SRDGLVQLSL (488 aa)) folds into the Sema domain. Residues Cys-105 and Cys-116 are joined by a disulfide bond. Asn-127 carries N-linked (GlcNAc...) asparagine glycosylation. Cystine bridges form between Cys-134–Cys-143, Cys-274–Cys-386, Cys-298–Cys-346, and Cys-522–Cys-540. The Ig-like C2-type domain occupies 552–670 (PTSKRRARRQ…IHTIVKLNLN (119 aa)). Residue Asn-595 is glycosylated (N-linked (GlcNAc...) asparagine). Cys-653 and Cys-719 are joined by a disulfide. Positions 728–754 (RRQRNKGGAKWKHVQEMKKKRNRRHHE) are enriched in basic residues. A disordered region spans residues 728-761 (RRQRNKGGAKWKHVQEMKKKRNRRHHEPARPPST).

Belongs to the semaphorin family. In terms of tissue distribution, developing spinal cord and developing visual system. Collapsin-1, -2, -3, and -5 bind to overlapping but distinct axon tracts.

Its subcellular location is the secreted. In terms of biological role, induces the collapse and paralysis of neuronal growth cones. Could potentially act as repulsive cues toward specific neuronal populations. Binds to neuropilin. The sequence is that of Semaphorin-3D (SEMA3D) from Gallus gallus (Chicken).